The chain runs to 104 residues: Small ribosomal subunit protein uS10 (104 aa).

Belongs to the universal ribosomal protein uS10 family. In terms of assembly, part of the 30S ribosomal subunit.

In terms of biological role, involved in the binding of tRNA to the ribosomes. The chain is Small ribosomal subunit protein uS10 from Alkaliphilus metalliredigens (strain QYMF).